Here is a 379-residue protein sequence, read N- to C-terminus: Protein-glutamate methylesterase/protein-glutamine glutaminase (379 aa).

The region spanning 4–121 (KVLVVDDSSF…AKNSDEAGSL (118 aa)) is the Response regulatory domain. At Asp-55 the chain carries 4-aspartylphosphate. One can recognise a CheB-type methylesterase domain in the interval 185-379 (SGKEYKLLAI…ASMVKEISRG (195 aa)). Active-site residues include Ser-197, His-224, and Asp-321.

This sequence belongs to the CheB family. In terms of processing, phosphorylated by CheA. Phosphorylation of the N-terminal regulatory domain activates the methylesterase activity.

Its subcellular location is the cytoplasm. It catalyses the reaction [protein]-L-glutamate 5-O-methyl ester + H2O = L-glutamyl-[protein] + methanol + H(+). The catalysed reaction is L-glutaminyl-[protein] + H2O = L-glutamyl-[protein] + NH4(+). Involved in chemotaxis. Part of a chemotaxis signal transduction system that modulates chemotaxis in response to various stimuli. Catalyzes the demethylation of specific methylglutamate residues introduced into the chemoreceptors (methyl-accepting chemotaxis proteins or MCP) by CheR. Also mediates the irreversible deamidation of specific glutamine residues to glutamic acid. The protein is Protein-glutamate methylesterase/protein-glutamine glutaminase of Colwellia psychrerythraea (strain 34H / ATCC BAA-681) (Vibrio psychroerythus).